The sequence spans 131 residues: Fluoride-specific ion channel FluC 2 (131 aa).

4 helical membrane passes run 5–25, 39–59, 70–90, and 104–124; these read FGVAVGGALGALARYGVSLLV, LATLLVNVLGSFLLAFITTLA, LAVGTGFIGALTTFSTFAWES, and LYVLGNLVLGYAAVLLGRALA. Gly-78 and Thr-81 together coordinate Na(+).

Belongs to the fluoride channel Fluc/FEX (TC 1.A.43) family.

The protein resides in the cell membrane. It catalyses the reaction fluoride(in) = fluoride(out). Its activity is regulated as follows. Na(+) is not transported, but it plays an essential structural role and its presence is essential for fluoride channel function. Fluoride-specific ion channel. Important for reducing fluoride concentration in the cell, thus reducing its toxicity. The protein is Fluoride-specific ion channel FluC 2 of Deinococcus geothermalis (strain DSM 11300 / CIP 105573 / AG-3a).